Consider the following 232-residue polypeptide: MANIGKRLSAARETFDRDTLYTIDDAVAHVKSNAKAKFDETIELAINLGVDPRHADQMVRGVCNLPNGTGRSVRVAVFAKGPKAEEATKAGADVVGAEDLMEQIQGGNINFDKVIATPDMMPLVGRLGKVLGPRGMMPNPKVGTVTMGVTKAVNDSKGGAVEFRVEKAGIIHAGVGKASFTEAALAENVRALVDAIVKAKPSGAKGLYVRRIALSSTMGPGVKIDTSAAVSA.

The protein belongs to the universal ribosomal protein uL1 family. In terms of assembly, part of the 50S ribosomal subunit.

Its function is as follows. Binds directly to 23S rRNA. The L1 stalk is quite mobile in the ribosome, and is involved in E site tRNA release. Functionally, protein L1 is also a translational repressor protein, it controls the translation of the L11 operon by binding to its mRNA. The protein is Large ribosomal subunit protein uL1 of Maricaulis maris (strain MCS10) (Caulobacter maris).